The primary structure comprises 115 residues: Large ribosomal subunit protein eL30 (115 aa).

It belongs to the eukaryotic ribosomal protein eL30 family. As to quaternary structure, component of the large ribosomal subunit.

Its subcellular location is the cytoplasm. Component of the large ribosomal subunit. The ribosome is a large ribonucleoprotein complex responsible for the synthesis of proteins in the cell. This chain is Large ribosomal subunit protein eL30 (RPL30), found in Gallus gallus (Chicken).